The sequence spans 308 residues: Aspartate carbamoyltransferase catalytic subunit (308 aa).

2 residues coordinate carbamoyl phosphate: arginine 57 and threonine 58. Lysine 86 serves as a coordination point for L-aspartate. 3 residues coordinate carbamoyl phosphate: arginine 107, histidine 135, and glutamine 138. Arginine 167 and arginine 228 together coordinate L-aspartate. 2 residues coordinate carbamoyl phosphate: leucine 267 and proline 268.

It belongs to the aspartate/ornithine carbamoyltransferase superfamily. ATCase family. In terms of assembly, heterooligomer of catalytic and regulatory chains.

The catalysed reaction is carbamoyl phosphate + L-aspartate = N-carbamoyl-L-aspartate + phosphate + H(+). The protein operates within pyrimidine metabolism; UMP biosynthesis via de novo pathway; (S)-dihydroorotate from bicarbonate: step 2/3. Its function is as follows. Catalyzes the condensation of carbamoyl phosphate and aspartate to form carbamoyl aspartate and inorganic phosphate, the committed step in the de novo pyrimidine nucleotide biosynthesis pathway. This Methanosarcina acetivorans (strain ATCC 35395 / DSM 2834 / JCM 12185 / C2A) protein is Aspartate carbamoyltransferase catalytic subunit.